The following is a 264-amino-acid chain: Glutamate racemase (264 aa).

Residues 10 to 11 (DS) and 42 to 43 (YG) contribute to the substrate site. Catalysis depends on cysteine 73, which acts as the Proton donor/acceptor. 74–75 (NT) serves as a coordination point for substrate. Cysteine 183 functions as the Proton donor/acceptor in the catalytic mechanism. A substrate-binding site is contributed by 184–185 (TH).

This sequence belongs to the aspartate/glutamate racemases family.

It carries out the reaction L-glutamate = D-glutamate. Its pathway is cell wall biogenesis; peptidoglycan biosynthesis. Provides the (R)-glutamate required for cell wall biosynthesis. The polypeptide is Glutamate racemase (Streptococcus pneumoniae (strain ATCC BAA-255 / R6)).